Reading from the N-terminus, the 874-residue chain is Alanine--tRNA ligase (874 aa).

4 residues coordinate Zn(2+): His-562, His-566, Cys-665, and His-669.

It belongs to the class-II aminoacyl-tRNA synthetase family. The cofactor is Zn(2+).

It localises to the cytoplasm. It carries out the reaction tRNA(Ala) + L-alanine + ATP = L-alanyl-tRNA(Ala) + AMP + diphosphate. Its function is as follows. Catalyzes the attachment of alanine to tRNA(Ala) in a two-step reaction: alanine is first activated by ATP to form Ala-AMP and then transferred to the acceptor end of tRNA(Ala). Also edits incorrectly charged Ser-tRNA(Ala) and Gly-tRNA(Ala) via its editing domain. This is Alanine--tRNA ligase from Pseudomonas entomophila (strain L48).